The chain runs to 35 residues: U5-ctenitoxin-Co1a (35 aa).

4 disulfides stabilise this stretch: Cys-4–Cys-18, Cys-11–Cys-24, Cys-17–Cys-32, and Cys-26–Cys-30.

In terms of tissue distribution, expressed by the venom gland.

It localises to the secreted. Blocks voltage-gated sodium channels (Nav). The protein is U5-ctenitoxin-Co1a of Ctenus ornatus (Brazilian spider).